A 952-amino-acid chain; its full sequence is Inactive atromentin synthetase invA6 (952 aa).

An adenylation (A) domain region spans residues 58–462 (DSSVQTRSFS…NGRIKDTVIV (405 aa)). Positions 594–672 (APSTETEKTL…SLAKYVDSLV (79 aa)) constitute a Carrier domain. The interval 599–669 (TEKTLGRLYA…VISSLAKYVD (71 aa)) is thiolation and peptide carrier (T) domain. Residue Ser-631 is modified to O-(pantetheine 4'-phosphoryl)serine. The tract at residues 695–939 (PIFMVHPGIG…LMDFDHVSGF (245 aa)) is thioesterase (TE) domain.

It belongs to the ATP-dependent AMP-binding enzyme family.

Functionally, inactive atromentin synthetase homolog. Does not accept 4-hydroxyphenylpyruvate (4-HPP) as substrate. Both the adenylation (A) and the thioesterase (TE) domain of the invA6 enzyme are inactive. This is Inactive atromentin synthetase invA6 (invA6) from Paxillus involutus (Naked brimcap).